Here is a 104-residue protein sequence, read N- to C-terminus: Flagellar hook-basal body complex protein FliE (104 aa).

This sequence belongs to the FliE family.

Its subcellular location is the bacterial flagellum basal body. The polypeptide is Flagellar hook-basal body complex protein FliE (Escherichia coli O139:H28 (strain E24377A / ETEC)).